A 912-amino-acid chain; its full sequence is Type II beta methyltransferase M.BslI (912 aa).

This sequence belongs to the N(4)/N(6)-methyltransferase family. N(4) subfamily.

The enzyme catalyses a 2'-deoxycytidine in DNA + S-adenosyl-L-methionine = an N(4)-methyl-2'-deoxycytidine in DNA + S-adenosyl-L-homocysteine + H(+). Its function is as follows. A beta subtype methylase. Recognizes the double-stranded sequence 5'-CCN(7)GG-3', methylates C-2 on both strands, and protects the DNA from cleavage by the BslI endonuclease. This is Type II beta methyltransferase M.BslI (bslIM) from Bacillus sp. (strain NEB-606).